A 360-amino-acid polypeptide reads, in one-letter code: F-box protein SKP2A (360 aa).

The F-box domain maps to 25-71 (IKEWKDIPVELLMRILSLVDDRNVIVASGVCTGWRDAISFGLTRLRL). (indol-3-yl)acetate contacts are provided by residues 127–128 (SL), 149–152 (NLSG), 175–178 (NLCG), and asparagine 202.

In terms of assembly, part of a SCF (ASK-cullin-F-box) protein ligase complex. Interacts with CUL1 (RUB1-modified and non-modified isoforms), SKP1A, SKP1B and ASK18. Recruit DPB and phosphorylated E2FC. Interacts with auxin. Auxin controls the interaction with DPB. Post-translationally, polyubiquitinated and subsequently targeted to proteasome. Auxin promotes this ubiquitination-mediated degradation. As to expression, expressed in embryo, seedlings, hypocotyl, roots, leaves and flowers.

The protein localises to the nucleus. Its pathway is protein modification; protein ubiquitination. Component of SCF(SKP2A) E3 ubiquitin ligase complexes, which mediate the ubiquitination and subsequent proteasomal degradation of target proteins (including cell cycle repressors). Acts as an auxin receptor; one active auxin is indole-3-acetate. Regulates the stability of the transcription factors E2FC and DPB, repressors of cell proliferation. Confers increase tolerance to osmotic stress by promoting cell division, especially in meristems. Promotes the formation of lateral root primordia. The sequence is that of F-box protein SKP2A (SKP2A) from Arabidopsis thaliana (Mouse-ear cress).